Consider the following 117-residue polypeptide: Large ribosomal subunit protein bL20 (117 aa).

Belongs to the bacterial ribosomal protein bL20 family.

Binds directly to 23S ribosomal RNA and is necessary for the in vitro assembly process of the 50S ribosomal subunit. It is not involved in the protein synthesizing functions of that subunit. In Ruminiclostridium cellulolyticum (strain ATCC 35319 / DSM 5812 / JCM 6584 / H10) (Clostridium cellulolyticum), this protein is Large ribosomal subunit protein bL20.